The chain runs to 1244 residues: Ras-specific guanine nucleotide-releasing factor 1 (1244 aa).

In terms of domain architecture, PH 1 spans 22–129 (DGTRKGYLSK…WVAAIARASY (108 aa)). The residue at position 71 (serine 71) is a Phosphoserine; by PLK2. The IQ domain maps to 204 to 229 (KKIKKVQSFLRGWLCRRKWKNIIQDY). The DH domain occupies 240 to 426 (KRNQVVFSML…EELSRVMHDE (187 aa)). The 127-residue stretch at 456–582 (TFVRQGSLIQ…WTSDIIQCVD (127 aa)) folds into the PH 2 domain. Residues serine 575 and serine 611 each carry the phosphoserine; by PLK2 modification. One can recognise an N-terminal Ras-GEF domain in the interval 629–743 (KVLQIRYASV…RRRKLSLNIP (115 aa)). The segment at 707-730 (GDAPKSPRASRKFSSPPPLAIGTS) is disordered. Serine 739 is modified (phosphoserine). Phosphoserine; by PLK2 occurs at positions 760 and 781. Residues 800-840 (TLEESSGFRKPTSDILKEESDDDQSDVDDTEVSPPTPKSFR) form a disordered region. Acidic residues predominate over residues 818 to 830 (ESDDDQSDVDDTE). Phosphoserine; by PLK2 is present on serine 854. Positions 1009 to 1241 (SAMEIAEQLT…YEASLRIEPK (233 aa)) constitute a Ras-GEF domain.

In terms of assembly, homooligomer and heterooligomer with RASGRF2. Interacts with USP8, thereby regulating its stability. Phosphorylated by PLK2, leading to ubiquitination and degradation by the proteasome. In terms of processing, ubiquitinated and degraded following phosphorylation by PLK2. Post-translationally, phosphorylated by SRC and LCK. Phosphorylation by LCK increases its capacity to stimulate the GDP/GTP exchange on Ras, whereas its phosphorylation by SRC seems not to have an effect on stimulation activity.

Its function is as follows. Promotes the exchange of Ras-bound GDP by GTP. In Rattus norvegicus (Rat), this protein is Ras-specific guanine nucleotide-releasing factor 1 (Rasgrf1).